A 295-amino-acid polypeptide reads, in one-letter code: Ribosomal protein L11 methyltransferase (295 aa).

Thr150, Gly171, Asp193, and Asn232 together coordinate S-adenosyl-L-methionine.

The protein belongs to the methyltransferase superfamily. PrmA family.

It is found in the cytoplasm. The catalysed reaction is L-lysyl-[protein] + 3 S-adenosyl-L-methionine = N(6),N(6),N(6)-trimethyl-L-lysyl-[protein] + 3 S-adenosyl-L-homocysteine + 3 H(+). Functionally, methylates ribosomal protein L11. In Neisseria meningitidis serogroup A / serotype 4A (strain DSM 15465 / Z2491), this protein is Ribosomal protein L11 methyltransferase.